The following is a 224-amino-acid chain: Orotate phosphoribosyltransferase (224 aa).

K29 contacts 5-phospho-alpha-D-ribose 1-diphosphate. 37-38 contributes to the orotate binding site; the sequence is FF. Residues 75-76, R105, K106, K109, H111, and 130-138 contribute to the 5-phospho-alpha-D-ribose 1-diphosphate site; these read YK and DDVITAGTS. Orotate contacts are provided by T134 and R162.

The protein belongs to the purine/pyrimidine phosphoribosyltransferase family. PyrE subfamily. In terms of assembly, homodimer. Requires Mg(2+) as cofactor.

The catalysed reaction is orotidine 5'-phosphate + diphosphate = orotate + 5-phospho-alpha-D-ribose 1-diphosphate. Its pathway is pyrimidine metabolism; UMP biosynthesis via de novo pathway; UMP from orotate: step 1/2. Its function is as follows. Catalyzes the transfer of a ribosyl phosphate group from 5-phosphoribose 1-diphosphate to orotate, leading to the formation of orotidine monophosphate (OMP). The chain is Orotate phosphoribosyltransferase from Bordetella pertussis (strain Tohama I / ATCC BAA-589 / NCTC 13251).